A 144-amino-acid polypeptide reads, in one-letter code: Large ribosomal subunit protein uL13 (144 aa).

This sequence belongs to the universal ribosomal protein uL13 family. In terms of assembly, part of the 50S ribosomal subunit.

Its function is as follows. This protein is one of the early assembly proteins of the 50S ribosomal subunit, although it is not seen to bind rRNA by itself. It is important during the early stages of 50S assembly. This chain is Large ribosomal subunit protein uL13, found in Mesomycoplasma hyopneumoniae (strain 7448) (Mycoplasma hyopneumoniae).